The chain runs to 1374 residues: DNA-directed RNA polymerase subunit beta (1374 aa).

The protein belongs to the RNA polymerase beta chain family. In terms of assembly, the RNAP catalytic core consists of 2 alpha, 1 beta, 1 beta' and 1 omega subunit. When a sigma factor is associated with the core the holoenzyme is formed, which can initiate transcription.

It catalyses the reaction RNA(n) + a ribonucleoside 5'-triphosphate = RNA(n+1) + diphosphate. In terms of biological role, DNA-dependent RNA polymerase catalyzes the transcription of DNA into RNA using the four ribonucleoside triphosphates as substrates. The polypeptide is DNA-directed RNA polymerase subunit beta (Rickettsia typhi (strain ATCC VR-144 / Wilmington)).